A 309-amino-acid polypeptide reads, in one-letter code: Mycothiol acetyltransferase (309 aa).

2 consecutive N-acetyltransferase domains span residues 16–158 (ETLA…LDLP) and 166–309 (VSVR…RTET). Position 47 (E47) interacts with 1D-myo-inositol 2-(L-cysteinylamino)-2-deoxy-alpha-D-glucopyranoside. 92–94 (LVV) contacts acetyl-CoA. Residues E193, K232, and E241 each contribute to the 1D-myo-inositol 2-(L-cysteinylamino)-2-deoxy-alpha-D-glucopyranoside site. Acetyl-CoA contacts are provided by residues 245-247 (LGI) and 252-258 (QGGGLGK). Y279 contacts 1D-myo-inositol 2-(L-cysteinylamino)-2-deoxy-alpha-D-glucopyranoside.

This sequence belongs to the acetyltransferase family. MshD subfamily. Monomer.

It carries out the reaction 1D-myo-inositol 2-(L-cysteinylamino)-2-deoxy-alpha-D-glucopyranoside + acetyl-CoA = mycothiol + CoA + H(+). Catalyzes the transfer of acetyl from acetyl-CoA to desacetylmycothiol (Cys-GlcN-Ins) to form mycothiol. This is Mycothiol acetyltransferase from Streptomyces coelicolor (strain ATCC BAA-471 / A3(2) / M145).